The following is a 456-amino-acid chain: Transcription factor bHLH62 (456 aa).

The segment covering 159–185 (RTNSPFPINNEPPITTNEKMPRVSSSP) has biased composition (polar residues). Residues 159 to 254 (RTNSPFPINN…KTKSIDPYKD (96 aa)) form a disordered region. A compositionally biased stretch (basic and acidic residues) spans 223–254 (KEIEEKEDSDPKRCKKSEENGDKTKSIDPYKD). The bHLH domain maps to 264-314 (QATDSHSLAERVRREKISERMKLLQDLVPGCNKVTGKALMLDEIINYVQSL).

Homodimer. In terms of tissue distribution, expressed constitutively in roots, leaves, stems, and flowers.

Its subcellular location is the nucleus. The polypeptide is Transcription factor bHLH62 (BHLH62) (Arabidopsis thaliana (Mouse-ear cress)).